A 661-amino-acid chain; its full sequence is CD180 antigen (661 aa).

The signal sequence occupies residues 1 to 20; that stretch reads MAPDISCFFLVALFLASCRA. Residues 21–626 lie on the Extracellular side of the membrane; that stretch reads TTSSDQKCIE…RLSDVTLSCS (606 aa). Positions 33–53 constitute an LRRNT domain; the sequence is VNKTYNCENLGLNEIPGTLPN. Residues Asn-34, Asn-53, Asn-70, and Asn-78 are each glycosylated (N-linked (GlcNAc...) asparagine). LRR repeat units follow at residues 54–75, 78–99, 102–123, 126–147, 150–171, 174–195, and 201–221; these read STECLEFSFNVLPTIQNTTFSR, NLTFLDLTRCQIYWIHEDTFQS, RLDTLVLTANPLIFMAETALSG, ALKHLFFIQTGISSIDFIPLHN, TLESLYLGSNHISSIKLPKGFP, KLKVLDFQNNAIHYLSKEDMSS, and NLSLNLNGNDIAGIELGAFDS. N-linked (GlcNAc...) asparagine glycosylation is found at Asn-201, Asn-244, and Asn-288. LRR repeat units lie at residues 275–296, 299–321, 322–343, 346–366, and 371–391; these read SVESINLQKHYFFNISSNTFHC, GLQELDLTATHLSELPSGLVGLS, TLKKLVLSANKFENLCQISASN, SLTHLSIKGNTKRLELGTGCL, and NLRELDLSHDDIETSDCCNLQ. 2 N-linked (GlcNAc...) asparagine glycosylation sites follow: Asn-394 and Asn-402. LRR repeat units lie at residues 397 to 418, 421 to 442, 446 to 466, 470 to 493, 497 to 518, 521 to 544, and 546 to 566; these read HLQSLNLSYNEPLSLKTEAFKE, QLELLDLAFTRLKVKDAQSPFQ, LLKVLNLSHSLLDISSEQLFD, ALQHLNLQGNHFPKGNIQKTNSLQ, RLEILVLSFCDLSSIDQHAFTS, MMNHVDLSHNRLTSSSIEALSHLK, and IYLNLASNRISIILPSLLPIL. N-linked (GlcNAc...) asparagine glycosylation occurs at Asn-451. Residues 577 to 627 enclose the LRRCT domain; that stretch reads NPLDCTCSNIYFLEWYKENMQKLEDTEDTLCENPPLLRGVRLSDVTLSCSM. Residues 627 to 650 form a helical membrane-spanning segment; that stretch reads MAAVGIFFLIVFLLVFAILLIFAV. Topologically, residues 651–661 are cytoplasmic; the sequence is KYFLRWKYQHI.

It belongs to the Toll-like receptor family. As to quaternary structure, M-shaped tetramer of two CD180-LY86 heterodimers. B-lymphocytes and spleen. Not detected in thymus, kidney, muscle, heart, brain or liver.

The protein localises to the cell membrane. Its function is as follows. May cooperate with MD-1 and TLR4 to mediate the innate immune response to bacterial lipopolysaccharide (LPS) in B-cells. Leads to NF-kappa-B activation. Also involved in the life/death decision of B-cells. The protein is CD180 antigen (Cd180) of Mus musculus (Mouse).